The following is a 250-amino-acid chain: HLA class II histocompatibility antigen, DO alpha chain (250 aa).

The signal sequence occupies residues 1–25 (MALRAGLVLGFHTLMTLLSPQEAGA). The alpha-1 stretch occupies residues 26–110 (TKADHMGSYG…ERSNRSRAIN (85 aa)). Residues 26 to 217 (TKADHMGSYG…VPIPPPDAME (192 aa)) lie on the Extracellular side of the membrane. N-linked (GlcNAc...) asparagine glycosylation is found at Asn-104 and Asn-144. Positions 111 to 204 (VPPRVTVLPK…GLDAPLLRHW (94 aa)) are alpha-2. Residues 113 to 205 (PRVTVLPKSR…LDAPLLRHWE (93 aa)) enclose the Ig-like C1-type domain. Cys-133 and Cys-189 are oxidised to a cystine. The interval 205 to 217 (ELQVPIPPPDAME) is connecting peptide. The helical transmembrane segment at 218–240 (TLVCALGLAIGLVGFLVGTVLII) threads the bilayer. The Cytoplasmic portion of the chain corresponds to 241-250 (MGTYVSSVPR).

It belongs to the MHC class II family. Heterodimer of an alpha chain (DOA) and a beta chain (DOB). Forms a heterotetrameric complex with an HLA-DM molecule during intracellular transport in endosomal/lysosomal compartments in B-cells.

It is found in the endosome membrane. It localises to the lysosome membrane. Important modulator in the HLA class II restricted antigen presentation pathway by interaction with the HLA-DM molecule in B-cells. Modifies peptide exchange activity of HLA-DM. This is HLA class II histocompatibility antigen, DO alpha chain (HLA-DOA) from Homo sapiens (Human).